Consider the following 36-residue polypeptide: Photosystem I reaction center subunit VIII (36 aa).

Residues 9–29 (ILTPVVTLVFPGLMFALFFVL) form a helical membrane-spanning segment.

It belongs to the PsaI family.

It is found in the plastid. The protein resides in the chloroplast thylakoid membrane. May help in the organization of the PsaL subunit. In Emiliania huxleyi (Coccolithophore), this protein is Photosystem I reaction center subunit VIII.